We begin with the raw amino-acid sequence, 527 residues long: MSVPTGTKSGFKNKEKPLEVRKSNILAARAVADAIRTSLGPKGMDKMIQTARGQVIISNDGNTILQHMAVMHPAAKMLVDLSASQDSVAGDGTTSVVILAGSLLGAADKLLKKGIHPSIIAENFQKAAQRAAEVVMDMSKPIDLSDRETLIRAASTSLNSKIVSQFSSTLAPMLVDAALQAAKKTPEGGLTLDLNDIRIIKSLGGTIEDTTLANGLVLNNYAVKNAGGPSRMEKAKIGLIQFQLSAPKPDMENHIVVNDYRQMDKILKEERQYILGLAKAIKKSKCNVLLIQKSILRDAVSELALHFLAKLNIMVIKDIERDDIEFISRSTGAKPVADIEAFTEDKLGSCDLVEEVESSGSKTVRFSSREGSNTVSILVRGANDLVIDETERSLHDALCVLRSLFRVPALVPGGGACEVQVAQVIGKESRAMDGASAICYEEFSNAMLVIPTTLAENAGLNPVNVVTELRVRHEKGEVNAGISVRRGTSIMVEEHVIQPALVTTSAITLAAECAKGLLRIDDIAFSR.

This sequence belongs to the TCP-1 chaperonin family. As to quaternary structure, heterooligomeric complex of about 850 to 900 kDa that forms two stacked rings, 12 to 16 nm in diameter.

The protein localises to the cytoplasm. Molecular chaperone; assists the folding of proteins upon ATP hydrolysis. Known to play a role, in vitro, in the folding of actin and tubulin. The protein is T-complex protein 1 subunit delta (CCT4) of Yarrowia lipolytica (strain CLIB 122 / E 150) (Yeast).